The following is a 125-amino-acid chain: Inner membrane protein YbaN (125 aa).

Residues 1–6 (MQRIIL) are Cytoplasmic-facing. Residues 7–26 (IIIGWLAVVLGTLGVVLPVL) form a helical membrane-spanning segment. Over 27-45 (PTTPFILLAAWCFARSSPR) the chain is Periplasmic. Residues 46–63 (FHAWLLYRSWFGSYLRFW) form a helical membrane-spanning segment. Topologically, residues 64–74 (QKHHAMPRGVK) are cytoplasmic. The helical transmembrane segment at 75 to 92 (PRAILLILLTFAISLWFV) threads the bilayer. Residues 93 to 95 (QMP) are Periplasmic-facing. The chain crosses the membrane as a helical span at residues 96–118 (WVRIMLLVILACLLFYMWRIPVI). At 119–125 (DEKQEKH) the chain is on the cytoplasmic side.

It localises to the cell inner membrane. The protein is Inner membrane protein YbaN (ybaN) of Escherichia coli O157:H7.